A 110-amino-acid polypeptide reads, in one-letter code: Small ribosomal subunit protein bS16 (110 aa).

The disordered stretch occupies residues alanine 87–lysine 110.

This sequence belongs to the bacterial ribosomal protein bS16 family.

The chain is Small ribosomal subunit protein bS16 from Rhodopseudomonas palustris (strain BisA53).